Reading from the N-terminus, the 331-residue chain is Glyceraldehyde-3-phosphate dehydrogenase (331 aa).

NAD(+) is bound by residues 11–12 (RI), D33, and R78. Residues 148 to 150 (SCT), T179, 208 to 209 (TG), and R231 contribute to the D-glyceraldehyde 3-phosphate site. C149 (nucleophile) is an active-site residue. An NAD(+)-binding site is contributed by N313.

This sequence belongs to the glyceraldehyde-3-phosphate dehydrogenase family. Homotetramer.

Its subcellular location is the cytoplasm. The enzyme catalyses D-glyceraldehyde 3-phosphate + phosphate + NAD(+) = (2R)-3-phospho-glyceroyl phosphate + NADH + H(+). The protein operates within carbohydrate degradation; glycolysis; pyruvate from D-glyceraldehyde 3-phosphate: step 1/5. The polypeptide is Glyceraldehyde-3-phosphate dehydrogenase (GPD) (Eremothecium gossypii (strain ATCC 10895 / CBS 109.51 / FGSC 9923 / NRRL Y-1056) (Yeast)).